The sequence spans 87 residues: U3-theraphotoxin-Cg1b (87 aa).

An N-terminal signal peptide occupies residues 1–23 (MRTLTLIAIVTCAALVIFHAAAA). Residues 24-48 (EELEAQDVIQPEDIFTGVATLEEDR) constitute a propeptide that is removed on maturation. 3 cysteine pairs are disulfide-bonded: Cys52–Cys65, Cys56–Cys79, and Cys73–Cys84.

The protein belongs to the neurotoxin 12 (Hwtx-2) family. 03 (juruin) subfamily. In terms of tissue distribution, expressed by the venom gland.

The protein localises to the secreted. Probable ion channel inhibitor. The protein is U3-theraphotoxin-Cg1b of Chilobrachys guangxiensis (Chinese earth tiger tarantula).